The following is a 100-amino-acid chain: uncharacterized protein (100 aa).

The next 3 helical transmembrane spans lie at 9 to 29, 41 to 61, and 72 to 92; these read VYTYILSAVIYSQDLFPSWVV, PYLIHGNSFLFQILQVLITAP, and SIPFIFLALLLSQDFHVFLGI.

It is found in the membrane. This is an uncharacterized protein from Saccharomyces cerevisiae (strain ATCC 204508 / S288c) (Baker's yeast).